We begin with the raw amino-acid sequence, 491 residues long: UDP-N-acetylmuramate--L-alanine ligase (491 aa).

126–132 (GTHGKTT) provides a ligand contact to ATP.

This sequence belongs to the MurCDEF family.

It localises to the cytoplasm. The catalysed reaction is UDP-N-acetyl-alpha-D-muramate + L-alanine + ATP = UDP-N-acetyl-alpha-D-muramoyl-L-alanine + ADP + phosphate + H(+). It functions in the pathway cell wall biogenesis; peptidoglycan biosynthesis. In terms of biological role, cell wall formation. The chain is UDP-N-acetylmuramate--L-alanine ligase from Klebsiella pneumoniae (strain 342).